The chain runs to 343 residues: Protein RecA (343 aa).

Position 64–71 (64–71) interacts with ATP; the sequence is GPESSGKT.

This sequence belongs to the RecA family.

Its subcellular location is the cytoplasm. Can catalyze the hydrolysis of ATP in the presence of single-stranded DNA, the ATP-dependent uptake of single-stranded DNA by duplex DNA, and the ATP-dependent hybridization of homologous single-stranded DNAs. It interacts with LexA causing its activation and leading to its autocatalytic cleavage. In Bacillus cereus (strain ATCC 14579 / DSM 31 / CCUG 7414 / JCM 2152 / NBRC 15305 / NCIMB 9373 / NCTC 2599 / NRRL B-3711), this protein is Protein RecA.